A 1300-amino-acid chain; its full sequence is Serine protease EspP (1300 aa).

The N-terminal stretch at 1 to 55 (MNKIYSLKYSHITGGLIAVSELSGRVSSRATGKKKHKRILALCFLGLLQSSYSFA) is a signal peptide. In terms of domain architecture, Peptidase S6 spans 57–311 (QMDISNFYIR…NQTTIDNLKN (255 aa)). Catalysis depends on charge relay system residues His-127, Asp-156, and Ser-263. An Autotransporter domain is found at 1034–1300 (DINGEAGAWA…AVNANFRYSF (267 aa)).

Post-translationally, cleaved to release the mature protein from the outer membrane.

The protein resides in the periplasm. It localises to the secreted. Its subcellular location is the cell surface. It is found in the cell outer membrane. Functionally, serine protease with cytotoxic effect. Disrupts actin cytoskeleton resulting cell detachment in vitro. In Escherichia coli, this protein is Serine protease EspP (espP).